A 1059-amino-acid chain; its full sequence is Isoleucine--tRNA ligase (1059 aa).

Residues 47-57 (PYTTGHIHLGT) carry the 'HIGH' region motif. A 'KMSKS' region motif is present at residues 591–595 (KMSKS). Lys594 is a binding site for ATP.

The protein belongs to the class-I aminoacyl-tRNA synthetase family. IleS type 2 subfamily. As to quaternary structure, monomer. The cofactor is Zn(2+).

Its subcellular location is the cytoplasm. The catalysed reaction is tRNA(Ile) + L-isoleucine + ATP = L-isoleucyl-tRNA(Ile) + AMP + diphosphate. Its function is as follows. Catalyzes the attachment of isoleucine to tRNA(Ile). As IleRS can inadvertently accommodate and process structurally similar amino acids such as valine, to avoid such errors it has two additional distinct tRNA(Ile)-dependent editing activities. One activity is designated as 'pretransfer' editing and involves the hydrolysis of activated Val-AMP. The other activity is designated 'posttransfer' editing and involves deacylation of mischarged Val-tRNA(Ile). This is Isoleucine--tRNA ligase from Methanoculleus marisnigri (strain ATCC 35101 / DSM 1498 / JR1).